The following is a 70-amino-acid chain: Putative membrane protein insertion efficiency factor (70 aa).

This sequence belongs to the UPF0161 family.

The protein resides in the cell inner membrane. Its function is as follows. Could be involved in insertion of integral membrane proteins into the membrane. In Methylobacillus flagellatus (strain ATCC 51484 / DSM 6875 / VKM B-1610 / KT), this protein is Putative membrane protein insertion efficiency factor.